The primary structure comprises 230 residues: Uracil phosphoribosyltransferase (230 aa).

GTP is bound at residue 38–42 (KGLVK). 5-phospho-alpha-D-ribose 1-diphosphate-binding positions include Arg-87, Arg-112, and 140-148 (DPMIATGST). Residues Ile-204 and 209 to 211 (GDA) each bind uracil. Asp-210 contacts 5-phospho-alpha-D-ribose 1-diphosphate.

The protein belongs to the UPRTase family. Mg(2+) is required as a cofactor.

It carries out the reaction UMP + diphosphate = 5-phospho-alpha-D-ribose 1-diphosphate + uracil. The protein operates within pyrimidine metabolism; UMP biosynthesis via salvage pathway; UMP from uracil: step 1/1. With respect to regulation, allosterically activated by GTP. Functionally, catalyzes the conversion of uracil and 5-phospho-alpha-D-ribose 1-diphosphate (PRPP) to UMP and diphosphate. The chain is Uracil phosphoribosyltransferase from Thermococcus kodakarensis (strain ATCC BAA-918 / JCM 12380 / KOD1) (Pyrococcus kodakaraensis (strain KOD1)).